The primary structure comprises 120 residues: NAD(P)H-quinone oxidoreductase subunit 3, chloroplastic (120 aa).

3 consecutive transmembrane segments (helical) span residues 7 to 27 (YDYF…IFSL), 64 to 84 (MFAL…PWAM), and 89 to 109 (FGIS…IGLV).

This sequence belongs to the complex I subunit 3 family. NDH is composed of at least 16 different subunits, 5 of which are encoded in the nucleus.

The protein localises to the plastid. Its subcellular location is the chloroplast thylakoid membrane. It carries out the reaction a plastoquinone + NADH + (n+1) H(+)(in) = a plastoquinol + NAD(+) + n H(+)(out). The enzyme catalyses a plastoquinone + NADPH + (n+1) H(+)(in) = a plastoquinol + NADP(+) + n H(+)(out). NDH shuttles electrons from NAD(P)H:plastoquinone, via FMN and iron-sulfur (Fe-S) centers, to quinones in the photosynthetic chain and possibly in a chloroplast respiratory chain. The immediate electron acceptor for the enzyme in this species is believed to be plastoquinone. Couples the redox reaction to proton translocation, and thus conserves the redox energy in a proton gradient. This is NAD(P)H-quinone oxidoreductase subunit 3, chloroplastic from Marchantia polymorpha (Common liverwort).